We begin with the raw amino-acid sequence, 112 residues long: Nucleoid-associated protein lpg2755 (112 aa).

Belongs to the YbaB/EbfC family. Homodimer.

The protein resides in the cytoplasm. It localises to the nucleoid. Its function is as follows. Binds to DNA and alters its conformation. May be involved in regulation of gene expression, nucleoid organization and DNA protection. The polypeptide is Nucleoid-associated protein lpg2755 (Legionella pneumophila subsp. pneumophila (strain Philadelphia 1 / ATCC 33152 / DSM 7513)).